A 290-amino-acid chain; its full sequence is tRNA dimethylallyltransferase (290 aa).

ATP is bound at residue 11–18 (GPTASGKS). 13-18 (TASGKS) serves as a coordination point for substrate. Interaction with substrate tRNA regions lie at residues 36-39 (DSMQ) and 158-162 (QRIVR).

Belongs to the IPP transferase family. Monomer. Mg(2+) is required as a cofactor.

The enzyme catalyses adenosine(37) in tRNA + dimethylallyl diphosphate = N(6)-dimethylallyladenosine(37) in tRNA + diphosphate. Catalyzes the transfer of a dimethylallyl group onto the adenine at position 37 in tRNAs that read codons beginning with uridine, leading to the formation of N6-(dimethylallyl)adenosine (i(6)A). The polypeptide is tRNA dimethylallyltransferase (Bartonella henselae (strain ATCC 49882 / DSM 28221 / CCUG 30454 / Houston 1) (Rochalimaea henselae)).